The sequence spans 396 residues: L-lactate dehydrogenase (396 aa).

The 380-residue stretch at 1–380 (MIISAASDYR…TQDSLVQGLG (380 aa)) folds into the FMN hydroxy acid dehydrogenase domain. Tyrosine 24 is a substrate binding site. FMN contacts are provided by serine 106 and glutamine 127. Tyrosine 129 is a binding site for substrate. Position 155 (threonine 155) interacts with FMN. Residue arginine 164 coordinates substrate. Residue lysine 251 coordinates FMN. Histidine 275 serves as the catalytic Proton acceptor. Residue arginine 278 participates in substrate binding. 306–330 (DSGIRNGLDVVRMIALGADTVLLGR) contributes to the FMN binding site.

Belongs to the FMN-dependent alpha-hydroxy acid dehydrogenase family. Requires FMN as cofactor.

The protein resides in the cell inner membrane. The catalysed reaction is (S)-lactate + A = pyruvate + AH2. Catalyzes the conversion of L-lactate to pyruvate. Is coupled to the respiratory chain. This chain is L-lactate dehydrogenase, found in Escherichia coli O7:K1 (strain IAI39 / ExPEC).